The following is a 145-amino-acid chain: uncharacterized protein (145 aa).

This is an uncharacterized protein from Homo sapiens (Human).